Consider the following 499-residue polypeptide: Cytochrome P450 81E8 (499 aa).

The helical transmembrane segment at 3–23 (TFYLSLIISLFFLIITLKVFF) threads the bilayer. Residue Cys436 coordinates heme.

The protein belongs to the cytochrome P450 family. Requires heme as cofactor.

It is found in the membrane. In terms of biological role, probable monooxygenases exhibiting no activity with isoflavones such as formononetin, biochanin A, pseudobaptigenin, daidzein, genistein, isoformononetin and prunetin, or with flavonoids including naringenin, liquiritigenin, apigenin, luteolin, or kaempferol. This chain is Cytochrome P450 81E8, found in Medicago truncatula (Barrel medic).